The sequence spans 446 residues: Tryptophan dimethylallyltransferase (446 aa).

L-tryptophan is bound by residues 83–84 (IL) and Glu-92. Residues Arg-103, Lys-189, and Tyr-191 each contribute to the substrate site. Positions 193 and 246 each coordinate L-tryptophan. Residues Arg-259, Lys-261, Tyr-263, Gln-345, and Tyr-347 each contribute to the substrate site.

It belongs to the tryptophan dimethylallyltransferase family. As to quaternary structure, homodimer.

The catalysed reaction is L-tryptophan + dimethylallyl diphosphate = 4-(3-methylbut-2-enyl)-L-tryptophan + diphosphate. Its pathway is alkaloid biosynthesis; ergot alkaloid biosynthesis. Functionally, tryptophan dimethylallyltransferase; part of the gene cluster that mediates the biosynthesis of fungal ergot alkaloid. DmaW catalyzes the first step of ergot alkaloid biosynthesis by condensing dimethylallyl diphosphate (DMAP) and tryptophan to form 4-dimethylallyl-L-tryptophan. The second step is catalyzed by the methyltransferase easF that methylates 4-dimethylallyl-L-tryptophan in the presence of S-adenosyl-L-methionine, resulting in the formation of 4-dimethylallyl-L-abrine. The catalase easC and the FAD-dependent oxidoreductase easE then transform 4-dimethylallyl-L-abrine to chanoclavine-I which is further oxidized by easD in the presence of NAD(+), resulting in the formation of chanoclavine-I aldehyde. Chanoclavine-I aldehyde is the precursor of ergoamides and ergopeptines in Clavicipitaceae, and clavine-type alcaloids such as fumiclavine in Trichocomaceae. However, the metabolites downstream of chanoclavine-I aldehyde in Arthrodermataceae have not been identified yet. This Arthroderma otae (strain ATCC MYA-4605 / CBS 113480) (Microsporum canis) protein is Tryptophan dimethylallyltransferase.